Here is a 148-residue protein sequence, read N- to C-terminus: Outer envelope pore protein 16-1, chloroplastic (148 aa).

A contains 4 beta strands region spans residues 2–73 (PSSTFSGTVS…EHALKKLCKE (72 aa)). The next 3 membrane-spanning stretches (helical) occupy residues 75–91 (VYWGAAGGVYIGTEYGI), 102–118 (NAMLAGAATGAVLSAVG), and 125–142 (IVIDAILGGALATASQFV).

The protein belongs to the Tim17/Tim22/Tim23 family. Plastid outer envelope porin OEP16 (TC 1.B.30) subfamily. Homodimer and oligomers in membrane. Forms large complexes including TOC33, pPORA and OEP161 during pPORA import into plastids at the plastid envelope membrane. Expressed predominantly in leaves and cotyledons.

It is found in the plastid. It localises to the chloroplast outer membrane. The protein resides in the etioplast membrane. Its activity is regulated as follows. Stimulated by GTP. Its function is as follows. Voltage-dependent high-conductance channel with a slight cation-selectivity; selective for amino acids but excludes triosephosphates or uncharged sugars. Non-essential amino acid-selective channel protein and translocation pore for NADPH:protochlorophyllide oxidoreductase A (PORA) and possibly PORB. Involved in PORA precursor (pPORA) import and thus confers photoprotection onto etiolated seedlings during greening. This chain is Outer envelope pore protein 16-1, chloroplastic (OEP161), found in Arabidopsis thaliana (Mouse-ear cress).